The chain runs to 45 residues: Large ribosomal subunit protein bL34 (45 aa).

This sequence belongs to the bacterial ribosomal protein bL34 family.

The protein is Large ribosomal subunit protein bL34 of Kocuria rhizophila (strain ATCC 9341 / DSM 348 / NBRC 103217 / DC2201).